The sequence spans 218 residues: Peptide deformylase (218 aa).

Fe cation-binding residues include C130 and H172. E173 is an active-site residue. A Fe cation-binding site is contributed by H176.

Belongs to the polypeptide deformylase family. The cofactor is Fe(2+).

It carries out the reaction N-terminal N-formyl-L-methionyl-[peptide] + H2O = N-terminal L-methionyl-[peptide] + formate. Its function is as follows. Removes the formyl group from the N-terminal Met of newly synthesized proteins. Requires at least a dipeptide for an efficient rate of reaction. N-terminal L-methionine is a prerequisite for activity but the enzyme has broad specificity at other positions. The sequence is that of Peptide deformylase from Bifidobacterium adolescentis (strain ATCC 15703 / DSM 20083 / NCTC 11814 / E194a).